A 69-amino-acid chain; its full sequence is Putative membrane protein insertion efficiency factor (69 aa).

This sequence belongs to the UPF0161 family.

It is found in the cell membrane. Functionally, could be involved in insertion of integral membrane proteins into the membrane. This Clostridium botulinum (strain Okra / Type B1) protein is Putative membrane protein insertion efficiency factor.